The sequence spans 448 residues: Cytoplasmic tRNA 2-thiolation protein 2 (448 aa).

This sequence belongs to the CTU2/NCS2 family.

The protein resides in the cytoplasm. Its pathway is tRNA modification; 5-methoxycarbonylmethyl-2-thiouridine-tRNA biosynthesis. In terms of biological role, plays a central role in 2-thiolation of mcm(5)S(2)U at tRNA wobble positions of tRNA(Lys), tRNA(Glu) and tRNA(Gln). May act by forming a heterodimer with NCS6 that ligates sulfur from thiocarboxylated URM1 onto the uridine of tRNAs at wobble position. Prior mcm(5) tRNA modification by the elongator complex is required for 2-thiolation. May also be involved in protein urmylation. This is Cytoplasmic tRNA 2-thiolation protein 2 from Debaryomyces hansenii (strain ATCC 36239 / CBS 767 / BCRC 21394 / JCM 1990 / NBRC 0083 / IGC 2968) (Yeast).